Reading from the N-terminus, the 533-residue chain is Protein transport protein SEC9 (533 aa).

4 disordered regions span residues 1 to 32 (MGFK…IATK), 68 to 184 (RPGA…MNAT), 200 to 246 (MAQD…KRAP), and 259 to 284 (PTNE…GQAP). The segment covering 11–24 (PPEEDTPERNRDLL) has biased composition (basic and acidic residues). The segment covering 92-102 (GNTSRVGQPQQ) has biased composition (polar residues). Residues 157-172 (GGPGNPYGGSTAGAGT) show a composition bias toward gly residues. The segment covering 227–240 (RPQAAAETPRPQAA) has biased composition (low complexity). 2 consecutive t-SNARE coiled-coil homology domains span residues 318-380 (RFTK…VAEL) and 470-532 (DEME…LTNI).

The protein belongs to the SNAP-25 family.

This Eremothecium gossypii (strain ATCC 10895 / CBS 109.51 / FGSC 9923 / NRRL Y-1056) (Yeast) protein is Protein transport protein SEC9 (SEC9).